A 116-amino-acid chain; its full sequence is uncharacterized protein (116 aa).

2 helical membrane passes run 40–60 and 72–92; these read AIVK…IGIL and FLGS…VVPI.

It localises to the membrane. This is an uncharacterized protein from Saccharomyces cerevisiae (strain ATCC 204508 / S288c) (Baker's yeast).